The sequence spans 324 residues: Homeobox protein Nkx-2.5 (324 aa).

A DNA-binding region (homeobox) is located at residues 138–197; it reads RRKPRVLFSQAQVYELERRFKQQRYLSAPERDQLASVLKLTSTQVKIWFQNRRYKCKRQR.

The protein belongs to the NK-2 homeobox family. In terms of assembly, homodimer (via the homeobox); binds DNA as homodimer. Interacts (via the homeobox) with TBX5 (via the T-box); this complex binds DNA. Interacts with HIPK1 and HIPK2, but not HIPK3. Interacts with the C-terminal zinc finger of GATA4 through its homeobox domain. Also interacts with JARID2 which represses its ability to activate transcription of ANF. Interacts with FBLIM1. Interacts with TBX18. Interacts with histone methyltransferase NSD2 (via HMG box). Interacts with NEDD9. Interacts with TBX1. In terms of tissue distribution, expressed only in the heart.

It localises to the nucleus. Functionally, transcription factor required for the development of the heart and the spleen. During heart development, acts as a transcriptional activator of NPPA/ANF in cooperation with GATA4. May cooperate with TBX2 to negatively modulate expression of NPPA/ANF in the atrioventricular canal. Binds to the core DNA motif of NPPA promoter. Together with PBX1, required for spleen development through a mechanism that involves CDKN2B repression. Positively regulates transcription of genes such as COL3A1 and MMP2, resulting in increased pulmonary endothelial fibrosis in response to hypoxia. This Homo sapiens (Human) protein is Homeobox protein Nkx-2.5 (NKX2-5).